We begin with the raw amino-acid sequence, 203 residues long: DNA-directed RNA polymerase subunit gamma (203 aa).

Cys34, Cys36, Cys49, and Cys52 together coordinate Zn(2+).

It belongs to the RNA polymerase beta' chain family. RpoC1 subfamily. As to quaternary structure, in cyanobacteria the RNAP catalytic core is composed of 2 alpha, 1 beta, 1 beta', 1 gamma and 1 omega subunit. When a sigma factor is associated with the core the holoenzyme is formed, which can initiate transcription. Requires Zn(2+) as cofactor.

It carries out the reaction RNA(n) + a ribonucleoside 5'-triphosphate = RNA(n+1) + diphosphate. In terms of biological role, DNA-dependent RNA polymerase catalyzes the transcription of DNA into RNA using the four ribonucleoside triphosphates as substrates. This Prochlorothrix hollandica protein is DNA-directed RNA polymerase subunit gamma (rpoC1).